A 634-amino-acid chain; its full sequence is MVRLVLPNPGLDTRILSLAELETIEQEEASSRPKWDNKAQYLLTCVGFCVGLGNVWRFPYLCQSHGGGAFMIPFLILLVLEGIPLLHLEFAIGQRLRRGSLGVWSSIHPALKGVGLTSMLVSFVVGLYYNTIISWIMWYLFNSFQEPLPWSECPLNENQTGYVDECARSSPVDYFWYRETLNISTSISDSGSIQWRMLLCLACAWSVLYMCTIRGIETTGKVVYITSTLPYVVLTIFLIRGLTLKGATKGIIYLFTPNVTELANPVTWLDAGAQVFFSFSLAFGGLISFSSYNSVHNNCERDSVIVSIINGFTSVYVAIVIYSIIGFRATQRYDDCFSTNILTLINGFDLPEGNVTQENFVEMQRQCNASNPAAYAQLVFQTCDINSFLSEGVEGTGLAFIVFTEAITKMPVSPLWSVLFFIMLFCLGLSSMFGNMEGVVVPLQDLKVIPPKWPKELLTGLICLGTFLIGFIFTLNSGQYWLSLLDSYAVSIPLLIIAFCEMFSVVYVYGVDRFNKDIEFMIGHKPNIFWQVTWRVVSPLLMLIILVFFFVVQVSQELTYSIWNPGYEEFPKSQKISHPNWVYAVVVIVAGVPSLTIPSYAIYKLIRNCCQKPGDRQGLVSTLSTASMNGDLKY.

Residues 1-41 lie on the Cytoplasmic side of the membrane; it reads MVRLVLPNPGLDTRILSLAELETIEQEEASSRPKWDNKAQY. S17 carries the phosphoserine modification. A helical transmembrane segment spans residues 42–62; it reads LLTCVGFCVGLGNVWRFPYLC. The Extracellular portion of the chain corresponds to 63 to 65; that stretch reads QSH. Residues 66-86 traverse the membrane as a helical segment; it reads GGGAFMIPFLILLVLEGIPLL. The Cytoplasmic segment spans residues 87-120; it reads HLEFAIGQRLRRGSLGVWSSIHPALKGVGLTSML. The chain crosses the membrane as a helical span at residues 121 to 141; the sequence is VSFVVGLYYNTIISWIMWYLF. The Extracellular portion of the chain corresponds to 142 to 192; sequence NSFQEPLPWSECPLNENQTGYVDECARSSPVDYFWYRETLNISTSISDSGS. Residues N158 and N182 are each glycosylated (N-linked (GlcNAc...) asparagine). Residues 193–213 traverse the membrane as a helical segment; that stretch reads IQWRMLLCLACAWSVLYMCTI. Topologically, residues 214 to 221 are cytoplasmic; sequence RGIETTGK. Residues 222–242 form a helical membrane-spanning segment; that stretch reads VVYITSTLPYVVLTIFLIRGL. The Extracellular portion of the chain corresponds to 243–268; sequence TLKGATKGIIYLFTPNVTELANPVTW. Residue N258 is glycosylated (N-linked (GlcNAc...) asparagine). A helical transmembrane segment spans residues 269-289; it reads LDAGAQVFFSFSLAFGGLISF. At 290-304 the chain is on the cytoplasmic side; sequence SSYNSVHNNCERDSV. The helical transmembrane segment at 305-325 threads the bilayer; the sequence is IVSIINGFTSVYVAIVIYSII. The Extracellular segment spans residues 326–413; it reads GFRATQRYDD…TEAITKMPVS (88 aa). N354 and N368 each carry an N-linked (GlcNAc...) asparagine glycan. A helical membrane pass occupies residues 414–434; it reads PLWSVLFFIMLFCLGLSSMFG. Topologically, residues 435–456 are cytoplasmic; sequence NMEGVVVPLQDLKVIPPKWPKE. A helical transmembrane segment spans residues 457-477; sequence LLTGLICLGTFLIGFIFTLNS. The Extracellular portion of the chain corresponds to 478 to 487; it reads GQYWLSLLDS. A helical membrane pass occupies residues 488–508; that stretch reads YAVSIPLLIIAFCEMFSVVYV. Over 509 to 531 the chain is Cytoplasmic; it reads YGVDRFNKDIEFMIGHKPNIFWQ. Residues 532-552 traverse the membrane as a helical segment; the sequence is VTWRVVSPLLMLIILVFFFVV. The Extracellular portion of the chain corresponds to 553–581; it reads QVSQELTYSIWNPGYEEFPKSQKISHPNW. A helical transmembrane segment spans residues 582–602; it reads VYAVVVIVAGVPSLTIPSYAI. Over 603-634 the chain is Cytoplasmic; it reads YKLIRNCCQKPGDRQGLVSTLSTASMNGDLKY. S627 is subject to Phosphoserine.

The protein belongs to the sodium:neurotransmitter symporter (SNF) (TC 2.A.22) family. SLC6A19 subfamily. As to quaternary structure, interacts in a tissue-specific manner with ACE2 in small intestine and with CLTRN in the kidney. Interacts with CLTRN; this interaction is required for trafficking of SLC6A19 to the plasma membrane and for its catalytic activation in kidneys. Interacts with ACE2; this interaction is required for trafficking of SLC6A19 to the plasma membrane and for its catalytic activation in intestine. Interacts with ANPEP; the interaction positively regulates its amino acid transporter activity.

It localises to the membrane. It catalyses the reaction L-alanine(in) + Na(+)(in) = L-alanine(out) + Na(+)(out). It carries out the reaction L-cysteine(in) + Na(+)(in) = L-cysteine(out) + Na(+)(out). The enzyme catalyses L-glutamine(in) + Na(+)(in) = L-glutamine(out) + Na(+)(out). The catalysed reaction is glycine(in) + Na(+)(in) = glycine(out) + Na(+)(out). It catalyses the reaction L-isoleucine(in) + Na(+)(in) = L-isoleucine(out) + Na(+)(out). It carries out the reaction L-leucine(in) + Na(+)(in) = L-leucine(out) + Na(+)(out). The enzyme catalyses L-methionine(in) + Na(+)(in) = L-methionine(out) + Na(+)(out). The catalysed reaction is L-phenylalanine(in) + Na(+)(in) = L-phenylalanine(out) + Na(+)(out). It catalyses the reaction L-serine(in) + Na(+)(in) = L-serine(out) + Na(+)(out). It carries out the reaction L-tryptophan(in) + Na(+)(in) = L-tryptophan(out) + Na(+)(out). The enzyme catalyses L-tyrosine(in) + Na(+)(in) = L-tyrosine(out) + Na(+)(out). The catalysed reaction is L-valine(in) + Na(+)(in) = L-valine(out) + Na(+)(out). In terms of biological role, transporter that mediates resorption of neutral amino acids across the apical membrane of renal and intestinal epithelial cells. This uptake is sodium-dependent and chloride-independent. Requires CLTRN in kidney or ACE2 in intestine for cell surface expression and amino acid transporter activity. The chain is Sodium-dependent neutral amino acid transporter B(0)AT1 (SLC6A19) from Pongo abelii (Sumatran orangutan).